The chain runs to 228 residues: Geranylgeranylglyceryl phosphate synthase (228 aa).

Residue lysine 14 coordinates sn-glycerol 1-phosphate. Residues aspartate 16 and threonine 42 each coordinate Mg(2+). Sn-glycerol 1-phosphate-binding positions include 160–165 (YIEYSG), glycine 190, and 210–211 (GN).

The protein belongs to the GGGP/HepGP synthase family. Group I subfamily. Requires Mg(2+) as cofactor.

It localises to the cytoplasm. It catalyses the reaction sn-glycerol 1-phosphate + (2E,6E,10E)-geranylgeranyl diphosphate = sn-3-O-(geranylgeranyl)glycerol 1-phosphate + diphosphate. Its pathway is membrane lipid metabolism; glycerophospholipid metabolism. In terms of biological role, prenyltransferase that catalyzes the transfer of the geranylgeranyl moiety of geranylgeranyl diphosphate (GGPP) to the C3 hydroxyl of sn-glycerol-1-phosphate (G1P). This reaction is the first ether-bond-formation step in the biosynthesis of archaeal membrane lipids. This chain is Geranylgeranylglyceryl phosphate synthase, found in Methanocella arvoryzae (strain DSM 22066 / NBRC 105507 / MRE50).